The chain runs to 901 residues: Protein translocase subunit SecA (901 aa).

ATP contacts are provided by residues Gln-87, 105–109, and Asp-512; that span reads GEGKT. The segment at 839 to 901 is disordered; that stretch reads QMEEQRRQES…KYKQCHGRLA (63 aa). Residues 841-850 show a composition bias toward basic and acidic residues; that stretch reads EEQRRQESER. Zn(2+)-binding residues include Cys-885, Cys-887, Cys-896, and His-897. Positions 891 to 901 are enriched in basic residues; sequence KKYKQCHGRLA.

It belongs to the SecA family. As to quaternary structure, monomer and homodimer. Part of the essential Sec protein translocation apparatus which comprises SecA, SecYEG and auxiliary proteins SecDF-YajC and YidC. Zn(2+) is required as a cofactor.

It localises to the cell inner membrane. The protein resides in the cytoplasm. The enzyme catalyses ATP + H2O + cellular proteinSide 1 = ADP + phosphate + cellular proteinSide 2.. Part of the Sec protein translocase complex. Interacts with the SecYEG preprotein conducting channel. Has a central role in coupling the hydrolysis of ATP to the transfer of proteins into and across the cell membrane, serving both as a receptor for the preprotein-SecB complex and as an ATP-driven molecular motor driving the stepwise translocation of polypeptide chains across the membrane. This chain is Protein translocase subunit SecA, found in Erwinia tasmaniensis (strain DSM 17950 / CFBP 7177 / CIP 109463 / NCPPB 4357 / Et1/99).